A 640-amino-acid chain; its full sequence is Threonine--tRNA ligase (640 aa).

Residues 1–59 (MKIKVVLPDGSEREYEKGTKPMEIAREVGIKKVIGAVVDEELWDLKRPLERDCRIRFVT) form the TGS domain. The catalytic stretch occupies residues 240-531 (DHRKLGPQLE…LIEHFAGAFP (292 aa)). 3 residues coordinate Zn(2+): Cys332, His383, and His508.

The protein belongs to the class-II aminoacyl-tRNA synthetase family. In terms of assembly, homodimer. The cofactor is Zn(2+).

It is found in the cytoplasm. It carries out the reaction tRNA(Thr) + L-threonine + ATP = L-threonyl-tRNA(Thr) + AMP + diphosphate + H(+). Catalyzes the attachment of threonine to tRNA(Thr) in a two-step reaction: L-threonine is first activated by ATP to form Thr-AMP and then transferred to the acceptor end of tRNA(Thr). Also edits incorrectly charged L-seryl-tRNA(Thr). This Thermotoga neapolitana (strain ATCC 49049 / DSM 4359 / NBRC 107923 / NS-E) protein is Threonine--tRNA ligase.